A 456-amino-acid polypeptide reads, in one-letter code: Putative F-box/FBD/LRR-repeat protein At1g66300 (456 aa).

The segment at 1–23 is disordered; it reads MDEDGEKRVRTKRLCSPESSDKK. Positions 28-74 constitute an F-box domain; it reads VDWVRDLPESLICHVLLNLSTKDVIKNCVLSTKWRYLWRYVPGLDLD. LRR repeat units follow at residues 136–163, 185–210, 234–260, and 347–372; these read HLDL…KLCG, VKFA…TLCR, PNTM…TLSH, and FYED…VVGS. One can recognise an FBD domain in the interval 377 to 429; sequence MERTSIISGHRCLLSSLEYVEIETPLTGEVFEMKLVSYLLENSPILKKLTIHL.

The protein is Putative F-box/FBD/LRR-repeat protein At1g66300 of Arabidopsis thaliana (Mouse-ear cress).